Reading from the N-terminus, the 283-residue chain is MRAYLDLCQRIIDQGTWVENERTGKRCLTVINADLEYNVGNNEFPLITTRKSFFKSAIAEFIGYIRGYDSAADFRKLGTKTWDANANLNDAWLNNTHRKGEDDMGRVYGIQGRAWAKPDGGTIDQLKKIVDNLKDGIDDRAEIMTFYNPGEFHMGCLRPCMHTHNFSLLGDTLHLTSFQRSCDVPLGLNFNQVQVFVFLALMAQITGKKAGMAYHKIVNAHIYEDQLPLMKEVQLKREPLALPKLIINPEIKSLEDLETWVTMDDFKVEGYECHEAIKYPFAV.

Position 22 (R22) interacts with dUMP. Residue C160 is the Nucleophile of the active site. DUMP is bound by residues 180–183 (RSCD), N191, and 221–223 (HIY). D183 is a binding site for (6R)-5,10-methylene-5,6,7,8-tetrahydrofolate. A282 is a binding site for (6R)-5,10-methylene-5,6,7,8-tetrahydrofolate.

This sequence belongs to the thymidylate synthase family. Bacterial-type ThyA subfamily. As to quaternary structure, homodimer.

Its subcellular location is the cytoplasm. It carries out the reaction dUMP + (6R)-5,10-methylene-5,6,7,8-tetrahydrofolate = 7,8-dihydrofolate + dTMP. The protein operates within pyrimidine metabolism; dTTP biosynthesis. In terms of biological role, catalyzes the reductive methylation of 2'-deoxyuridine-5'-monophosphate (dUMP) to 2'-deoxythymidine-5'-monophosphate (dTMP) while utilizing 5,10-methylenetetrahydrofolate (mTHF) as the methyl donor and reductant in the reaction, yielding dihydrofolate (DHF) as a by-product. This enzymatic reaction provides an intracellular de novo source of dTMP, an essential precursor for DNA biosynthesis. The chain is Thymidylate synthase from Colwellia psychrerythraea (strain 34H / ATCC BAA-681) (Vibrio psychroerythus).